The primary structure comprises 371 residues: S-adenosylmethionine:tRNA ribosyltransferase-isomerase (371 aa).

It belongs to the QueA family. As to quaternary structure, monomer.

Its subcellular location is the cytoplasm. The catalysed reaction is 7-aminomethyl-7-carbaguanosine(34) in tRNA + S-adenosyl-L-methionine = epoxyqueuosine(34) in tRNA + adenine + L-methionine + 2 H(+). It functions in the pathway tRNA modification; tRNA-queuosine biosynthesis. Its function is as follows. Transfers and isomerizes the ribose moiety from AdoMet to the 7-aminomethyl group of 7-deazaguanine (preQ1-tRNA) to give epoxyqueuosine (oQ-tRNA). This Nitratidesulfovibrio vulgaris (strain DP4) (Desulfovibrio vulgaris) protein is S-adenosylmethionine:tRNA ribosyltransferase-isomerase.